The sequence spans 692 residues: Glycine--tRNA ligase beta subunit (692 aa).

This sequence belongs to the class-II aminoacyl-tRNA synthetase family. In terms of assembly, tetramer of two alpha and two beta subunits.

The protein localises to the cytoplasm. The enzyme catalyses tRNA(Gly) + glycine + ATP = glycyl-tRNA(Gly) + AMP + diphosphate. This chain is Glycine--tRNA ligase beta subunit, found in Alteromonas mediterranea (strain DSM 17117 / CIP 110805 / LMG 28347 / Deep ecotype).